Here is a 111-residue protein sequence, read N- to C-terminus: Cytochrome c (111 aa).

An N-acetylalanine modification is found at Ala-1. Cys-22, Cys-25, and His-26 together coordinate heme c. Lys-80 carries the post-translational modification N6,N6,N6-trimethyllysine. Met-88 is a binding site for heme c. Lys-94 carries the N6,N6,N6-trimethyllysine modification.

This sequence belongs to the cytochrome c family. Binds 1 heme c group covalently per subunit.

It is found in the mitochondrion intermembrane space. Its function is as follows. Electron carrier protein. The oxidized form of the cytochrome c heme group can accept an electron from the heme group of the cytochrome c1 subunit of cytochrome reductase. Cytochrome c then transfers this electron to the cytochrome oxidase complex, the final protein carrier in the mitochondrial electron-transport chain. The sequence is that of Cytochrome c from Vigna radiata var. radiata (Mung bean).